The sequence spans 598 residues: Probable translation initiation factor IF-2 (598 aa).

Residues 8 to 226 form the tr-type G domain; the sequence is IRQPIISVLG…VTGLAQRFLE (219 aa). The tract at residues 17 to 24 is G1; sequence GHVDHGKT. A GTP-binding site is contributed by 17–24; that stretch reads GHVDHGKT. The tract at residues 42-46 is G2; the sequence is GITQH. Residues 81 to 84 are G3; the sequence is DTPG. GTP is bound by residues 81 to 85 and 135 to 138; these read DTPGH and NKVD. Positions 135 to 138 are G4; the sequence is NKVD. The segment at 203-205 is G5; that stretch reads SGV.

This sequence belongs to the TRAFAC class translation factor GTPase superfamily. Classic translation factor GTPase family. IF-2 subfamily.

Functionally, function in general translation initiation by promoting the binding of the formylmethionine-tRNA to ribosomes. Seems to function along with eIF-2. This is Probable translation initiation factor IF-2 from Methanopyrus kandleri (strain AV19 / DSM 6324 / JCM 9639 / NBRC 100938).